Consider the following 389-residue polypeptide: tRNA (guanine-N(7)-)-methyltransferase non-catalytic subunit TRM82 (389 aa).

3 WD repeats span residues 44–86 (QNVP…HQLK), 134–179 (GHTS…KGFL), and 184–222 (QFVS…LITE).

Belongs to the WD repeat TRM82 family. In terms of assembly, forms a heterodimer with the catalytic subunit TRM8.

Its subcellular location is the nucleus. It participates in tRNA modification; N(7)-methylguanine-tRNA biosynthesis. In terms of biological role, required for the formation of N(7)-methylguanine at position 46 (m7G46) in tRNA. In the complex, it is required to stabilize and induce conformational changes of the catalytic subunit. This Lodderomyces elongisporus (strain ATCC 11503 / CBS 2605 / JCM 1781 / NBRC 1676 / NRRL YB-4239) (Yeast) protein is tRNA (guanine-N(7)-)-methyltransferase non-catalytic subunit TRM82.